We begin with the raw amino-acid sequence, 236 residues long: Carbonyl reductase family member 4 (236 aa).

Residues 11–14 (SRGI), 34–35 (RN), Asp-55, and 82–84 (SAG) each bind NADP(+). Ser-134 is a substrate binding site. Residues Tyr-147, Lys-151, and 180–182 (IRT) each bind NADP(+). Residue Tyr-147 is the Proton acceptor of the active site.

The protein belongs to the short-chain dehydrogenases/reductases (SDR) family. As to quaternary structure, homotetramer (in vitro). Heterotetramer with HSD17B8; contains two molecules each of HSD17B8 and CBR4.

Its subcellular location is the mitochondrion matrix. The protein operates within lipid metabolism; fatty acid biosynthesis. Functionally, the heterotetramer with HSD17B8 has NADH-dependent 3-ketoacyl-acyl carrier protein reductase activity, and thereby plays a role in mitochondrial fatty acid biosynthesis. Within the heterotetramer, HSD17B8 binds NADH; CBR4 binds NADPD. The homotetramer has NADPH-dependent quinone reductase activity. Both homotetramer and the heterotetramer have broad in vitro substrate specificity and can reduce 9,10-phenanthrenequinone, 1,4-benzoquinone and various other o-quinones and p-quinones. This chain is Carbonyl reductase family member 4 (cbr4), found in Xenopus laevis (African clawed frog).